Consider the following 410-residue polypeptide: Translation initiation factor 2 subunit gamma (410 aa).

One can recognise a tr-type G domain in the interval glutamine 9–lysine 202. Residues glycine 18–threonine 25 form a G1 region. 4 residues coordinate Mg(2+): aspartate 21, threonine 25, glycine 46, and threonine 48. Aspartate 21–threonine 26 contacts GTP. A G2 region spans residues glycine 46–lysine 50. Zn(2+) contacts are provided by cysteine 61, cysteine 64, cysteine 73, and cysteine 76. A G3 region spans residues aspartate 90–glycine 93. Residues asparagine 145 to glutamate 148 and serine 180 to leucine 182 contribute to the GTP site. A G4 region spans residues asparagine 145–glutamate 148. The tract at residues serine 180–leucine 182 is G5.

It belongs to the TRAFAC class translation factor GTPase superfamily. Classic translation factor GTPase family. EIF2G subfamily. In terms of assembly, heterotrimer composed of an alpha, a beta and a gamma chain. Mg(2+) is required as a cofactor.

The enzyme catalyses GTP + H2O = GDP + phosphate + H(+). Functionally, eIF-2 functions in the early steps of protein synthesis by forming a ternary complex with GTP and initiator tRNA. This Thermococcus kodakarensis (strain ATCC BAA-918 / JCM 12380 / KOD1) (Pyrococcus kodakaraensis (strain KOD1)) protein is Translation initiation factor 2 subunit gamma.